A 718-amino-acid chain; its full sequence is Threonine--tRNA ligase, mitochondrial (718 aa).

Ser52 carries the phosphoserine modification. In terms of domain architecture, TGS spans 55–121 (QKEPRTIKIS…ETDSDLRFLT (67 aa)).

Belongs to the class-II aminoacyl-tRNA synthetase family. Homodimer.

Its subcellular location is the mitochondrion matrix. The catalysed reaction is tRNA(Thr) + L-threonine + ATP = L-threonyl-tRNA(Thr) + AMP + diphosphate + H(+). Functionally, catalyzes the attachment of threonine to tRNA(Thr) in a two-step reaction: threonine is first activated by ATP to form Thr-AMP and then transferred to the acceptor end of tRNA(Thr). Also edits incorrectly charged tRNA(Thr) via its editing domain. In Homo sapiens (Human), this protein is Threonine--tRNA ligase, mitochondrial (TARS2).